The primary structure comprises 397 residues: Cytoplasmic tRNA 2-thiolation protein 2 (397 aa).

This sequence belongs to the CTU2/NCS2 family.

It is found in the cytoplasm. The protein operates within tRNA modification; 5-methoxycarbonylmethyl-2-thiouridine-tRNA biosynthesis. Functionally, plays a central role in 2-thiolation of mcm(5)S(2)U at tRNA wobble positions of tRNA(Lys), tRNA(Glu) and tRNA(Gln). May act by forming a heterodimer with NCS6/CTU1 that ligates sulfur from thiocarboxylated URM1 onto the uridine of tRNAs at wobble position. This is Cytoplasmic tRNA 2-thiolation protein 2 from Drosophila grimshawi (Hawaiian fruit fly).